Reading from the N-terminus, the 474-residue chain is Fumarate hydratase class II (474 aa).

Substrate is bound by residues 104–106, 128–131, 138–140, and Thr186; these read SGT, HPND, and SSN. His187 (proton donor/acceptor) is an active-site residue. Ser318 is an active-site residue. Substrate is bound by residues Ser319 and 324 to 326; that span reads KVN.

The protein belongs to the class-II fumarase/aspartase family. Fumarase subfamily. In terms of assembly, homotetramer.

Its subcellular location is the cytoplasm. It catalyses the reaction (S)-malate = fumarate + H2O. It participates in carbohydrate metabolism; tricarboxylic acid cycle; (S)-malate from fumarate: step 1/1. Functionally, involved in the TCA cycle. Catalyzes the stereospecific interconversion of fumarate to L-malate. This chain is Fumarate hydratase class II, found in Mycobacterium bovis (strain ATCC BAA-935 / AF2122/97).